A 32-amino-acid chain; its full sequence is MSDIN-like toxin proprotein 11 (32 aa).

A propeptide spanning residues 1-10 (MSDINATRLP) is cleaved from the precursor. The segment at 1 to 32 (MSDINATRLPGMEPPSPMPCVGDADNFTLTRG) is disordered. The segment at residues 11-19 (GMEPPSPMP) is a cross-link (cyclopeptide (Gly-Pro)). Positions 20–32 (CVGDADNFTLTRG) are excised as a propeptide.

Belongs to the MSDIN fungal toxin family. In terms of processing, processed by the macrocyclase-peptidase enzyme POPB to yield a toxic cyclic nonapeptide. POPB first removes 10 residues from the N-terminus. Conformational trapping of the remaining peptide forces the enzyme to release this intermediate rather than proceed to macrocyclization. The enzyme rebinds the remaining peptide in a different conformation and catalyzes macrocyclization of the N-terminal 9 residues.

Probable toxin that belongs to the MSDIN-like toxin family responsible for a large number of food poisoning cases and deaths. The polypeptide is MSDIN-like toxin proprotein 11 (Amanita bisporigera (Destroying angel)).